The chain runs to 396 residues: Imidazolonepropionase (396 aa).

His69 and His71 together coordinate Fe(3+). Residues His69 and His71 each coordinate Zn(2+). Positions 78, 136, and 163 each coordinate 4-imidazolone-5-propanoate. Tyr136 contacts N-formimidoyl-L-glutamate. Position 224 (His224) interacts with Fe(3+). A Zn(2+)-binding site is contributed by His224. Gln227 is a 4-imidazolone-5-propanoate binding site. A Fe(3+)-binding site is contributed by Asp298. Asp298 is a binding site for Zn(2+). The N-formimidoyl-L-glutamate site is built by Asn300 and Gly302. 4-imidazolone-5-propanoate is bound at residue Thr303.

The protein belongs to the metallo-dependent hydrolases superfamily. HutI family. The cofactor is Zn(2+). It depends on Fe(3+) as a cofactor.

Its subcellular location is the cytoplasm. It catalyses the reaction 4-imidazolone-5-propanoate + H2O = N-formimidoyl-L-glutamate. It functions in the pathway amino-acid degradation; L-histidine degradation into L-glutamate; N-formimidoyl-L-glutamate from L-histidine: step 3/3. In terms of biological role, catalyzes the hydrolytic cleavage of the carbon-nitrogen bond in imidazolone-5-propanoate to yield N-formimidoyl-L-glutamate. It is the third step in the universal histidine degradation pathway. The chain is Imidazolonepropionase from Cutibacterium acnes (strain DSM 16379 / KPA171202) (Propionibacterium acnes).